We begin with the raw amino-acid sequence, 511 residues long: 2-isopropylmalate synthase (511 aa).

Positions 6-269 (IIIFDTTLRD…YTDIKCENIF (264 aa)) constitute a Pyruvate carboxyltransferase domain. Positions 15, 203, 205, and 239 each coordinate Mn(2+). The regulatory domain stretch occupies residues 394-511 (VIEKLSVISG…SLKVEERKMA (118 aa)).

This sequence belongs to the alpha-IPM synthase/homocitrate synthase family. LeuA type 1 subfamily. As to quaternary structure, homodimer. Mn(2+) is required as a cofactor.

It is found in the cytoplasm. It catalyses the reaction 3-methyl-2-oxobutanoate + acetyl-CoA + H2O = (2S)-2-isopropylmalate + CoA + H(+). It functions in the pathway amino-acid biosynthesis; L-leucine biosynthesis; L-leucine from 3-methyl-2-oxobutanoate: step 1/4. In terms of biological role, catalyzes the condensation of the acetyl group of acetyl-CoA with 3-methyl-2-oxobutanoate (2-ketoisovalerate) to form 3-carboxy-3-hydroxy-4-methylpentanoate (2-isopropylmalate). The protein is 2-isopropylmalate synthase of Campylobacter jejuni subsp. jejuni serotype O:23/36 (strain 81-176).